We begin with the raw amino-acid sequence, 416 residues long: Putative competence-damage inducible protein (416 aa).

The protein belongs to the CinA family.

The polypeptide is Putative competence-damage inducible protein (Geobacillus sp. (strain WCH70)).